Consider the following 237-residue polypeptide: Uridylate kinase (237 aa).

Residue 9–12 (KLSG) coordinates ATP. G51 provides a ligand contact to UMP. 2 residues coordinate ATP: G52 and R56. UMP-binding positions include D71 and 132–139 (CGNPFFTT). ATP-binding residues include T159, Y165, and D168.

It belongs to the UMP kinase family. As to quaternary structure, homohexamer.

The protein localises to the cytoplasm. It catalyses the reaction UMP + ATP = UDP + ADP. Its pathway is pyrimidine metabolism; CTP biosynthesis via de novo pathway; UDP from UMP (UMPK route): step 1/1. With respect to regulation, inhibited by UTP. Its function is as follows. Catalyzes the reversible phosphorylation of UMP to UDP. This is Uridylate kinase from Prochlorococcus marinus (strain NATL1A).